A 179-amino-acid polypeptide reads, in one-letter code: Large ribosomal subunit protein uL6 (179 aa).

It belongs to the universal ribosomal protein uL6 family. As to quaternary structure, part of the 50S ribosomal subunit.

Its function is as follows. This protein binds to the 23S rRNA, and is important in its secondary structure. It is located near the subunit interface in the base of the L7/L12 stalk, and near the tRNA binding site of the peptidyltransferase center. This is Large ribosomal subunit protein uL6 from Treponema pallidum (strain Nichols).